Here is a 117-residue protein sequence, read N- to C-terminus: Probable prefoldin subunit 1 (117 aa).

Belongs to the prefoldin subunit beta family. In terms of assembly, heterohexamer of two PFD-alpha type and four PFD-beta type subunits. As to expression, expressed in the distal cell tip of developing embryos.

The protein localises to the cytoplasm. Functionally, binds specifically to cytosolic chaperonin (c-CPN) and transfers target proteins to it. Binds to nascent polypeptide chain and promotes folding in an environment in which there are many competing pathways for nonnative proteins. Has a role in gonadogenesis. This is Probable prefoldin subunit 1 (pfd-1) from Caenorhabditis elegans.